We begin with the raw amino-acid sequence, 453 residues long: Allantoinase (453 aa).

6 residues coordinate Zn(2+): His-59, His-61, Lys-146, His-186, His-242, and Asp-315. Lys-146 is subject to N6-carboxylysine.

It belongs to the metallo-dependent hydrolases superfamily. Allantoinase family. As to quaternary structure, homotetramer. Zn(2+) is required as a cofactor. In terms of processing, carboxylation allows a single lysine to coordinate two zinc ions.

The catalysed reaction is (S)-allantoin + H2O = allantoate + H(+). The protein operates within nitrogen metabolism; (S)-allantoin degradation; allantoate from (S)-allantoin: step 1/1. Catalyzes the conversion of allantoin (5-ureidohydantoin) to allantoic acid by hydrolytic cleavage of the five-member hydantoin ring. The sequence is that of Allantoinase from Escherichia coli O127:H6 (strain E2348/69 / EPEC).